A 353-amino-acid chain; its full sequence is S-adenosylmethionine decarboxylase proenzyme (353 aa).

Active-site residues include Glu9 and Glu12. Ser69 serves as the catalytic Schiff-base intermediate with substrate; via pyruvic acid. Ser69 is modified (pyruvic acid (Ser); by autocatalysis). Cys83 serves as the catalytic Proton donor; for catalytic activity. Active-site proton acceptor; for processing activity residues include Ser232 and His245.

The protein belongs to the eukaryotic AdoMetDC family. Pyruvate serves as cofactor. In terms of processing, is synthesized initially as an inactive proenzyme. Formation of the active enzyme involves a self-maturation process in which the active site pyruvoyl group is generated from an internal serine residue via an autocatalytic post-translational modification. Two non-identical subunits are generated from the proenzyme in this reaction, and the pyruvate is formed at the N-terminus of the alpha chain, which is derived from the carboxyl end of the proenzyme. The post-translation cleavage follows an unusual pathway, termed non-hydrolytic serinolysis, in which the side chain hydroxyl group of the serine supplies its oxygen atom to form the C-terminus of the beta chain, while the remainder of the serine residue undergoes an oxidative deamination to produce ammonia and the pyruvoyl group blocking the N-terminus of the alpha chain.

It carries out the reaction S-adenosyl-L-methionine + H(+) = S-adenosyl 3-(methylsulfanyl)propylamine + CO2. Its pathway is amine and polyamine biosynthesis; S-adenosylmethioninamine biosynthesis; S-adenosylmethioninamine from S-adenosyl-L-methionine: step 1/1. The polypeptide is S-adenosylmethionine decarboxylase proenzyme (SAMDC) (Vicia faba (Broad bean)).